We begin with the raw amino-acid sequence, 280 residues long: Probable holocytochrome-c-type synthase (280 aa).

The interval 1 to 95 is disordered; that stretch reads MGSSQSTPKV…FALPTKREKS (95 aa). HRM repeat units follow at residues 35 to 40 and 56 to 61; these read QCPLTP and ACPVGA.

This sequence belongs to the cytochrome c-type heme lyase family.

It is found in the mitochondrion inner membrane. The catalysed reaction is holo-[cytochrome c] = apo-[cytochrome c] + heme b. In terms of biological role, probable lyase that catalyzes the covalent linking of the heme group to the cytochrome C apoprotein to produce the mature functional cytochrome. The chain is Probable holocytochrome-c-type synthase (cchl-1) from Caenorhabditis elegans.